Here is a 90-residue protein sequence, read N- to C-terminus: Small ribosomal subunit protein mS37 (90 aa).

Cys-27 and Cys-58 are disulfide-bonded.

Belongs to the mitochondrion-specific ribosomal protein mS37 family. Component of the mitochondrial small ribosomal subunit (mt-SSU). Mature N.crassa 74S mitochondrial ribosomes consist of a small (37S) and a large (54S) subunit. The 37S small subunit contains a 16S ribosomal RNA (16S mt-rRNA) and 32 different proteins. The 54S large subunit contains a 23S rRNA (23S mt-rRNA) and 42 different proteins.

The protein localises to the mitochondrion. Component of the mitochondrial ribosome (mitoribosome), a dedicated translation machinery responsible for the synthesis of mitochondrial genome-encoded proteins, including at least some of the essential transmembrane subunits of the mitochondrial respiratory chain. The mitoribosomes are attached to the mitochondrial inner membrane and translation products are cotranslationally integrated into the membrane. This is Small ribosomal subunit protein mS37 (mrp10) from Neurospora crassa (strain ATCC 24698 / 74-OR23-1A / CBS 708.71 / DSM 1257 / FGSC 987).